The sequence spans 251 residues: uncharacterized protein (251 aa).

Residues H5, H7, E101, H132, H163, and D209 each coordinate a divalent metal cation.

This sequence belongs to the metallo-dependent hydrolases superfamily. TatD-type hydrolase family. A divalent metal cation is required as a cofactor.

This is an uncharacterized protein from Methanocaldococcus jannaschii (strain ATCC 43067 / DSM 2661 / JAL-1 / JCM 10045 / NBRC 100440) (Methanococcus jannaschii).